Here is a 143-residue protein sequence, read N- to C-terminus: Type II secretion system core protein G (143 aa).

The propeptide at 1 to 8 (MQKRRQSG) is leader sequence. An N-methylphenylalanine modification is found at Phe-9. The chain crosses the membrane as a helical span at residues 9–29 (FTLLEVMVVIVILGILASLVV). Positions 70 to 92 (QGLDALVNKPTAAPEPRSYRDGG) are disordered.

It belongs to the GSP G family. Type II secretion system is composed of four main components: the outer membrane complex, the inner membrane complex, the cytoplasmic secretion ATPase and the periplasm-spanning pseudopilus. Forms homomultimers. Cleaved by the prepilin peptidase. Post-translationally, methylated by prepilin peptidase at the amino group of the N-terminal phenylalanine once the leader sequence is cleaved.

The protein localises to the cell inner membrane. Its function is as follows. Core component of the type II secretion system required for the energy-dependent secretion of extracellular factors such as proteases and toxins from the periplasm. Pseudopilin (pilin-like) protein that polymerizes to form the pseudopilus. Further polymerization triggers pseudopilus growth. This is Type II secretion system core protein G (exeG) from Aeromonas hydrophila.